Consider the following 141-residue polypeptide: Hemoglobin subunit alpha-2 (141 aa).

In terms of domain architecture, Globin spans 1 to 141; the sequence is VLSPADKNNV…VSTVLTSKYR (141 aa). Histidine 58 is a binding site for O2. Histidine 87 contacts heme b.

It belongs to the globin family. Heterotetramer of two alpha chains and two beta chains. Red blood cells.

Involved in oxygen transport from the lung to the various peripheral tissues. The polypeptide is Hemoglobin subunit alpha-2 (Varecia variegata (Black-and-white ruffed lemur)).